We begin with the raw amino-acid sequence, 275 residues long: Large ribosomal subunit protein uL2 (275 aa).

The segment at A208–K275 is disordered. 2 stretches are compositionally biased toward basic residues: residues G209 to T219 and K254 to R263.

Belongs to the universal ribosomal protein uL2 family. Part of the 50S ribosomal subunit. Forms a bridge to the 30S subunit in the 70S ribosome.

One of the primary rRNA binding proteins. Required for association of the 30S and 50S subunits to form the 70S ribosome, for tRNA binding and peptide bond formation. It has been suggested to have peptidyltransferase activity; this is somewhat controversial. Makes several contacts with the 16S rRNA in the 70S ribosome. This Coxiella burnetii (strain CbuK_Q154) (Coxiella burnetii (strain Q154)) protein is Large ribosomal subunit protein uL2.